The primary structure comprises 393 residues: Cysteine desulfurase (393 aa).

Pyridoxal 5'-phosphate-binding positions include Gly76 to Thr77, Asn155, Gln183, and Ser203 to His205. At Lys206 the chain carries N6-(pyridoxal phosphate)lysine. Thr241 contributes to the pyridoxal 5'-phosphate binding site. Catalysis depends on Cys328, which acts as the Cysteine persulfide intermediate. Cys328 is a binding site for [2Fe-2S] cluster.

Belongs to the class-V pyridoxal-phosphate-dependent aminotransferase family. NifS/IscS subfamily. In terms of assembly, homodimer. The cofactor is pyridoxal 5'-phosphate.

It catalyses the reaction (sulfur carrier)-H + L-cysteine = (sulfur carrier)-SH + L-alanine. Functionally, catalyzes the removal of elemental sulfur atoms from cysteine to produce alanine. Seems to participate in the biosynthesis of the nitrogenase metalloclusters by providing the inorganic sulfur required for the Fe-S core formation. In Bradyrhizobium diazoefficiens (strain JCM 10833 / BCRC 13528 / IAM 13628 / NBRC 14792 / USDA 110), this protein is Cysteine desulfurase.